The sequence spans 418 residues: Tyrosine--tRNA ligase (418 aa).

The short motif at 42 to 51 is the 'HIGH' region element; it reads PTSPDLHLGH. Positions 226–230 match the 'KMSKS' region motif; that stretch reads KMSKS. Lys-229 lines the ATP pocket. The 62-residue stretch at 339 to 400 folds into the S4 RNA-binding domain; that stretch reads VRLVALLTKS…GKRNFIKVRL (62 aa).

Belongs to the class-I aminoacyl-tRNA synthetase family. TyrS type 2 subfamily. Homodimer.

It is found in the cytoplasm. The catalysed reaction is tRNA(Tyr) + L-tyrosine + ATP = L-tyrosyl-tRNA(Tyr) + AMP + diphosphate + H(+). Its function is as follows. Catalyzes the attachment of tyrosine to tRNA(Tyr) in a two-step reaction: tyrosine is first activated by ATP to form Tyr-AMP and then transferred to the acceptor end of tRNA(Tyr). This Xylella fastidiosa (strain Temecula1 / ATCC 700964) protein is Tyrosine--tRNA ligase.